The sequence spans 412 residues: Putative competence-damage inducible protein (412 aa).

Belongs to the CinA family.

The sequence is that of Putative competence-damage inducible protein from Bacillus thuringiensis (strain Al Hakam).